The primary structure comprises 815 residues: Probable receptor-like protein kinase At2g39360 (815 aa).

A signal peptide spans 1 to 26 (MINLKLFLELKLCFLITLLCSSHISS). The Extracellular portion of the chain corresponds to 27 to 407 (VSDTFFINCG…SSSNKSSNTS (381 aa)). Residues asparagine 40, asparagine 45, asparagine 125, asparagine 146, asparagine 209, asparagine 244, asparagine 277, asparagine 331, asparagine 355, asparagine 401, and asparagine 405 are each glycosylated (N-linked (GlcNAc...) asparagine). A helical transmembrane segment spans residues 408–428 (VGLIAGLSAALCVALVFGVVV). Over 429 to 815 (SWWCIRKRRR…FAQMVREETR (387 aa)) the chain is Cytoplasmic. Residues 487–761 (FDESLVIGVG…GDLLWNLEFM (275 aa)) enclose the Protein kinase domain. ATP contacts are provided by residues 493–501 (IGVGGFGKV) and lysine 515. Aspartate 612 acts as the Proton acceptor in catalysis.

Belongs to the protein kinase superfamily. Ser/Thr protein kinase family.

The protein localises to the cell membrane. This is Probable receptor-like protein kinase At2g39360 from Arabidopsis thaliana (Mouse-ear cress).